Reading from the N-terminus, the 326-residue chain is Amino acid--[acyl-carrier-protein] ligase 1 (326 aa).

Cysteine 131 lines the Zn(2+) pocket. Residues arginine 159, glutamate 161, and 168-169 each bind ATP; that span reads RL. Glutamate 176 contributes to the Zn(2+) binding site. Glutamate 176 is an an L-alpha-amino acid binding site. Residues lysine 235 and 250–253 contribute to the ATP site; that span reads ACMS. Residue cysteine 279 coordinates Zn(2+). Residue arginine 286 coordinates ATP.

This sequence belongs to the class-II aminoacyl-tRNA synthetase family. Amino acid--[acyl-carrier-protein] ligase subfamily. Homodimer. The cofactor is Zn(2+).

It carries out the reaction an L-alpha-amino acid + holo-[ACP] + ATP = an L-alpha-aminoacyl-[ACP] + AMP + diphosphate. Functionally, catalyzes the ATP-dependent activation of L-glycine and its transfer to the phosphopantetheine prosthetic group covalently attached to the vicinal carrier protein bsr0959 of yet unknown function. May participate in nonribosomal peptide synthesis or related processes. L-alanine is a poor substrate whereas L-serine or D-amino acids are not substrates for ATP-dependent activation. Does not display tRNA aminoacylation activity. The polypeptide is Amino acid--[acyl-carrier-protein] ligase 1 (Bradyrhizobium diazoefficiens (strain JCM 10833 / BCRC 13528 / IAM 13628 / NBRC 14792 / USDA 110)).